Here is a 289-residue protein sequence, read N- to C-terminus: Acetyl-coenzyme A carboxylase carboxyl transferase subunit beta (289 aa).

Positions 28 to 289 (LWSKCPSCEA…ALLQKLPAAA (262 aa)) constitute a CoA carboxyltransferase N-terminal domain. Residues C32, C35, C51, and C54 each coordinate Zn(2+). A C4-type zinc finger spans residues 32-54 (CPSCEAVLYATDLENNLQVCPKC).

The protein belongs to the AccD/PCCB family. As to quaternary structure, acetyl-CoA carboxylase is a heterohexamer composed of biotin carboxyl carrier protein (AccB), biotin carboxylase (AccC) and two subunits each of ACCase subunit alpha (AccA) and ACCase subunit beta (AccD). Zn(2+) is required as a cofactor.

It localises to the cytoplasm. It carries out the reaction N(6)-carboxybiotinyl-L-lysyl-[protein] + acetyl-CoA = N(6)-biotinyl-L-lysyl-[protein] + malonyl-CoA. The protein operates within lipid metabolism; malonyl-CoA biosynthesis; malonyl-CoA from acetyl-CoA: step 1/1. Component of the acetyl coenzyme A carboxylase (ACC) complex. Biotin carboxylase (BC) catalyzes the carboxylation of biotin on its carrier protein (BCCP) and then the CO(2) group is transferred by the transcarboxylase to acetyl-CoA to form malonyl-CoA. The chain is Acetyl-coenzyme A carboxylase carboxyl transferase subunit beta from Dechloromonas aromatica (strain RCB).